Consider the following 183-residue polypeptide: uncharacterized protein (183 aa).

The N-terminal stretch at 1–29 (MQCWQQPFLRFLQQPFFLATASLAGSSSS) is a signal peptide. Residues 149 to 183 (PGSTCDGSLKGRAYPSCVPKRDPEHSREESHPLSG) are disordered. A compositionally biased stretch (basic and acidic residues) spans 167-183 (PKRDPEHSREESHPLSG).

It localises to the secreted. This is an uncharacterized protein from Homo sapiens (Human).